Reading from the N-terminus, the 119-residue chain is MAMTEESMDQVEVNCLCAQHAQTCTRPRCFAKEGLCANWFYNPALAFEGFDIPDSYQEGHGVDIEVKCSHHSSKLCHNGHDMICSYSRLGSHINIRCICNKPRPHMSLIEAACSMYNLN.

This Canine adenovirus serotype 1 (strain Utrecht) (CAdV-1) protein is Early E3 13.3 kDa protein.